A 537-amino-acid chain; its full sequence is Apolipoprotein N-acyltransferase (537 aa).

6 helical membrane-spanning segments follow: residues 10–30 (IALAIILTWGWKRALVAITAG), 37–57 (LAPFNLFPVLFITFPVLVWLI), 76–96 (YWFGLGYFVPGLYWIGYAFFV), 107–127 (FAVLGLPAYLSIFTAIGFALA), 181–201 (IGLWGMTFLTVAIFASPATLI), and 210–230 (AWRAPAAAVALLIAMSIFGAI). The 254-residue stretch at 248–501 (MQPNLQQDAK…EGILDASLPA (254 aa)) folds into the CN hydrolase domain. E295 serves as the catalytic Proton acceptor. Residue K360 is part of the active site. C413 functions as the Nucleophile in the catalytic mechanism. A helical transmembrane segment spans residues 507-527 (IYARVGDVPAAVLVALAVLLA).

It belongs to the CN hydrolase family. Apolipoprotein N-acyltransferase subfamily.

Its subcellular location is the cell inner membrane. The catalysed reaction is N-terminal S-1,2-diacyl-sn-glyceryl-L-cysteinyl-[lipoprotein] + a glycerophospholipid = N-acyl-S-1,2-diacyl-sn-glyceryl-L-cysteinyl-[lipoprotein] + a 2-acyl-sn-glycero-3-phospholipid + H(+). Its pathway is protein modification; lipoprotein biosynthesis (N-acyl transfer). Catalyzes the phospholipid dependent N-acylation of the N-terminal cysteine of apolipoprotein, the last step in lipoprotein maturation. The sequence is that of Apolipoprotein N-acyltransferase from Bradyrhizobium diazoefficiens (strain JCM 10833 / BCRC 13528 / IAM 13628 / NBRC 14792 / USDA 110).